The primary structure comprises 207 residues: Large ribosomal subunit protein uL4 (207 aa).

The disordered stretch occupies residues 44–71 (RRQGTQSAKTRAEVRGGGRKPWKQKGTG). Basic residues predominate over residues 60–71 (GGRKPWKQKGTG).

This sequence belongs to the universal ribosomal protein uL4 family. Part of the 50S ribosomal subunit.

In terms of biological role, one of the primary rRNA binding proteins, this protein initially binds near the 5'-end of the 23S rRNA. It is important during the early stages of 50S assembly. It makes multiple contacts with different domains of the 23S rRNA in the assembled 50S subunit and ribosome. Functionally, forms part of the polypeptide exit tunnel. The protein is Large ribosomal subunit protein uL4 of Alkaliphilus oremlandii (strain OhILAs) (Clostridium oremlandii (strain OhILAs)).